Reading from the N-terminus, the 487-residue chain is Protein nucleotidyltransferase YdiU (487 aa).

Positions 90, 92, 93, 113, 125, 126, 176, and 183 each coordinate ATP. Residue Asp-252 is the Proton acceptor of the active site. Mg(2+) contacts are provided by Asn-253 and Asp-262. Residue Asp-262 coordinates ATP.

Belongs to the SELO family. Requires Mg(2+) as cofactor. The cofactor is Mn(2+).

It catalyses the reaction L-seryl-[protein] + ATP = 3-O-(5'-adenylyl)-L-seryl-[protein] + diphosphate. The catalysed reaction is L-threonyl-[protein] + ATP = 3-O-(5'-adenylyl)-L-threonyl-[protein] + diphosphate. The enzyme catalyses L-tyrosyl-[protein] + ATP = O-(5'-adenylyl)-L-tyrosyl-[protein] + diphosphate. It carries out the reaction L-histidyl-[protein] + UTP = N(tele)-(5'-uridylyl)-L-histidyl-[protein] + diphosphate. It catalyses the reaction L-seryl-[protein] + UTP = O-(5'-uridylyl)-L-seryl-[protein] + diphosphate. The catalysed reaction is L-tyrosyl-[protein] + UTP = O-(5'-uridylyl)-L-tyrosyl-[protein] + diphosphate. In terms of biological role, nucleotidyltransferase involved in the post-translational modification of proteins. It can catalyze the addition of adenosine monophosphate (AMP) or uridine monophosphate (UMP) to a protein, resulting in modifications known as AMPylation and UMPylation. The chain is Protein nucleotidyltransferase YdiU from Pseudomonas savastanoi pv. phaseolicola (strain 1448A / Race 6) (Pseudomonas syringae pv. phaseolicola (strain 1448A / Race 6)).